Reading from the N-terminus, the 1197-residue chain is SRC kinase signaling inhibitor 1 (1197 aa).

A compositionally biased stretch (basic and acidic residues) spans 19 to 45; that stretch reads AEGRARSPREEVGPRDPGGRGEPDPER. Residues 19 to 80 are disordered; sequence AEGRARSPRE…GGSGGRRFSN (62 aa). Ser47 and Ser52 each carry phosphoserine. Residues 65-75 are compositionally biased toward gly residues; sequence LGGGGSGGSGG. Phosphoserine is present on Ser79. Residue Thr86 is modified to Phosphothreonine. Ser87, Ser98, Ser178, Ser200, Ser204, Ser214, and Ser260 each carry phosphoserine. Tyr276 is subject to Phosphotyrosine. Residues 319–415 are disordered; the sequence is ASRESSPTRR…RRDVKPDEDL (97 aa). Residues 321-331 are compositionally biased toward polar residues; it reads RESSPTRRLNN. Over residues 332–341 the composition is skewed to low complexity; sequence LSPASHLASS. Phosphoserine occurs at positions 333, 342, and 359. Residues 348-366 show a composition bias toward low complexity; the sequence is PSGLPSGLPSGSPSRSRLS. Residues Arg364 and Arg371 each carry the omega-N-methylarginine modification. 3 positions are modified to phosphoserine: Ser378, Ser397, and Ser399. Over residues 391 to 400 the composition is skewed to polar residues; sequence PTSQGVSPSP. Over residues 404–415 the composition is skewed to basic and acidic residues; sequence LERRDVKPDEDL. At Tyr431 the chain carries Phosphotyrosine. The interval 501–676 is disordered; sequence GFRLPPSSPQ…AVSSTPAGQP (176 aa). Over residues 520–531 the composition is skewed to pro residues; that stretch reads GGPPPPHSPYSG. A phosphoserine mark is found at Ser527, Ser530, and Ser534. Residue Arg535 is modified to Omega-N-methylarginine. A phosphoserine mark is found at Ser537, Ser547, Ser549, Ser551, and Ser556. Basic and acidic residues predominate over residues 595–607; it reads KDTETRERMEAME. Ser631 and Ser655 each carry phosphoserine. Phosphothreonine is present on residues Thr658 and Thr671. The segment at 681-731 is interaction with SNAP25; that stretch reads RLQMQMHLRGLQNSASDLRGQLQQLRKLQLQNQESVRALLKRTEAELSMRV. Coiled coils occupy residues 688 to 708 and 760 to 780; these read LRGLQNSASDLRGQLQQLRKL and EELITQQLNDLEKSVEKIQRD. Residues Ser878 and Ser900 each carry the phosphoserine modification. Disordered stretches follow at residues 891–949 and 983–1065; these read GLDF…ERDW and DCAS…VVTS. Thr918 bears the Phosphothreonine mark. Residue Ser1021 is modified to Phosphoserine. Residues 1036-1045 are compositionally biased toward pro residues; the sequence is KSPPPPPPRR. Residues Ser1077 and Ser1094 each carry the phosphoserine modification. Residues 1141 to 1163 are disordered; that stretch reads SRLKAAQGPAGSPDKGKHGKQRT.

The protein belongs to the SRCIN1 family. In terms of assembly, interacts with BCAR1/p130Cas through its C-terminal domain and with CSK, CTTN and SRC. Also interacts with MAPRE3/EB3, SORBS3/vinexin and the N-terminal coiled-coil region of SNAP25. Tyrosine-phosphorylated in response to EGF and to cell adhesion to integrin ligands. Expressed exclusively in brain. Abundant in telencephalon and expressed moderately in cerebellum, hypothalamus, thalamus, superior and inferior colliculi, and olfactory bulb. No expression detected in medulla oblongata, spinal cord or pituitary gland. Enriched in the neuropil rather than soma in the thalamus, corpus striatum and cerebral cortex. Detected in astrocytes.

The protein resides in the cytoplasm. Its subcellular location is the cytoskeleton. It is found in the cell projection. It localises to the axon. The protein localises to the dendrite. The protein resides in the presynapse. Its subcellular location is the postsynapse. It is found in the postsynaptic density. In terms of biological role, acts as a negative regulator of SRC by activating CSK which inhibits SRC activity and downstream signaling, leading to impaired cell spreading and migration. Regulates dendritic spine morphology. Involved in calcium-dependent exocytosis. May play a role in neurotransmitter release or synapse maintenance. The protein is SRC kinase signaling inhibitor 1 of Rattus norvegicus (Rat).